A 1394-amino-acid chain; its full sequence is ABC transporter patM (1394 aa).

The interval 1 to 41 (MVDNYHSSLDVAKTPIQSDADAQKSEAETEGPSSKSSQIAA) is disordered. The ABC transporter 1 domain maps to 98 to 341 (SPLQNRQRKQ…FEDLGFECLS (244 aa)). The next 6 membrane-spanning stretches (helical) occupy residues 437–457 (SLWA…GTLF), 467–487 (LFIF…QSMA), 511–531 (IAYA…AICY), 546–566 (GNFF…SMFF), 579–599 (AVLP…LYVP), and 688–708 (VGIN…GMEM). Residues 727 to 755 (VTHRRDKIDSETGQDQGNESSEMSAGQSN) form a disordered region. Polar residues predominate over residues 737–755 (ETGQDQGNESSEMSAGQSN). The ABC transporter 2 domain maps to 767–1013 (DKSHNLAWTN…EAIQYFQPRS (247 aa)). Position 808-815 (808-815 (GVSGAGKT)) interacts with ATP. Transmembrane regions (helical) follow at residues 1131 to 1151 (GAYN…PLGL), 1177 to 1197 (LAFV…SSLV), 1219 to 1239 (FLMY…CASL), 1245 to 1265 (AAFA…GTLS), 1280 to 1300 (ISPL…DLPI), and 1368 to 1388 (IGVF…MTYL).

The protein belongs to the ABC transporter superfamily. ABCG family. PDR (TC 3.A.1.205) subfamily.

The protein localises to the vacuole membrane. Its subcellular location is the cell membrane. It participates in mycotoxin biosynthesis; patulin biosynthesis. Its function is as follows. ABC transporter; part of the gene cluster that mediates the biosynthesis of patulin, an acetate-derived tetraketide mycotoxin produced by several fungal species that shows antimicrobial properties against several bacteria. May be involved in the secretion of E-ascladiol to be converted to patulin by the secreted patulin synthase patE. This is ABC transporter patM from Penicillium expansum (Blue mold rot fungus).